Consider the following 148-residue polypeptide: Probable histone H2B.2 (148 aa).

Over residues 1–32 (MAPKGEKKPAEKKPAEEKKSTVAEKAPAEKKP) the composition is skewed to basic and acidic residues. Positions 1–57 (MAPKGEKKPAEKKPAEEKKSTVAEKAPAEKKPKAGKKLPKEGGSAAGEKKKKRSKKS) are disordered. N6-acetyllysine occurs at positions 7, 36, and 37. Lys144 participates in a covalent cross-link: Glycyl lysine isopeptide (Lys-Gly) (interchain with G-Cter in ubiquitin).

Belongs to the histone H2B family. In terms of assembly, the nucleosome is a histone octamer containing two molecules each of H2A, H2B, H3 and H4 assembled in one H3-H4 heterotetramer and two H2A-H2B heterodimers. The octamer wraps approximately 147 bp of DNA. Can be acetylated to form H2BK6ac, H2BK33ac and H2BK34ac. Post-translationally, monoubiquitinated to form H2BK143ub1; may give a specific tag for epigenetic transcriptional activation.

The protein resides in the nucleus. Its subcellular location is the chromosome. Core component of nucleosome. Nucleosomes wrap and compact DNA into chromatin, limiting DNA accessibility to the cellular machineries which require DNA as a template. Histones thereby play a central role in transcription regulation, DNA repair, DNA replication and chromosomal stability. DNA accessibility is regulated via a complex set of post-translational modifications of histones, also called histone code, and nucleosome remodeling. The sequence is that of Probable histone H2B.2 from Medicago truncatula (Barrel medic).